The chain runs to 248 residues: PF03932 family protein CutC (248 aa).

This sequence belongs to the CutC family. As to quaternary structure, homodimer.

Its subcellular location is the cytoplasm. This is PF03932 family protein CutC from Salmonella paratyphi B (strain ATCC BAA-1250 / SPB7).